We begin with the raw amino-acid sequence, 268 residues long: Small ribosomal subunit protein eS1 (268 aa).

The disordered stretch occupies residues 1-21 (MAVGKNKGLSKGGKKGGKKKV).

This sequence belongs to the eukaryotic ribosomal protein eS1 family. In terms of assembly, component of the small ribosomal subunit. Mature ribosomes consist of a small (40S) and a large (60S) subunit. The 40S subunit contains about 33 different proteins and 1 molecule of RNA (18S). The 60S subunit contains about 49 different proteins and 3 molecules of RNA (28S, 5.8S and 5S).

Its subcellular location is the cytoplasm. Essential for oogenesis; required for late follicle cell development. This is Small ribosomal subunit protein eS1 from Drosophila persimilis (Fruit fly).